The primary structure comprises 94 residues: uncharacterized protein (94 aa).

The first 26 residues, 1-26 (MNDQRDQAVPWATGLAVAGFVAAVIA), serve as a signal peptide directing secretion. 2 helical membrane-spanning segments follow: residues 42–62 (LLAVGLNIVAVSGLAPTLWGW) and 71–91 (FVLGAAVGVAGAWLALLALTL).

It localises to the cell membrane. This is an uncharacterized protein from Mycobacterium tuberculosis (strain CDC 1551 / Oshkosh).